Consider the following 617-residue polypeptide: Protein fem-1 homolog C (617 aa).

7 ANK repeats span residues 2–31, 40–70, 82–111, 115–144, 148–177, 181–210, and 213–242; these read DLKT…KDDV, NGAT…SVEI, EGAP…SVNN, TNST…DLEV, HGHT…DVNR, KGNT…RMEK, and YGMT…TSKN. 2 TPR repeats span residues 245–279 and 338–371; these read INAL…RHSD and SYYI…QQNN. ANK repeat units lie at residues 481–523 and 527–556; these read NNFS…DVNV and EQNS…HFDS.

The protein belongs to the fem-1 family. As to quaternary structure, component of a CRL2 E3 ubiquitin-protein ligase complex, also named ECS (Elongin BC-CUL2/5-SOCS-box protein) complex.

It functions in the pathway protein modification; protein ubiquitination. In terms of biological role, substrate-recognition component of a Cul2-RING (CRL2) E3 ubiquitin-protein ligase complex of the DesCEND (destruction via C-end degrons) pathway, which recognizes a C-degron located at the extreme C terminus of target proteins, leading to their ubiquitination and degradation. The C-degron recognized by the DesCEND pathway is usually a motif of less than ten residues and can be present in full-length proteins, truncated proteins or proteolytically cleaved forms. The CRL2(FEM1C) complex specifically recognizes proteins with an arginine at the C-terminus: recognizes and binds proteins ending with -Lys/Arg-Xaa-Arg and -Lys/Arg-Xaa-Xaa-Arg C-degrons, leading to their ubiquitination and degradation. This Xenopus laevis (African clawed frog) protein is Protein fem-1 homolog C.